The sequence spans 311 residues: Aspartate carbamoyltransferase catalytic subunit (311 aa).

Residues R55 and T56 each contribute to the carbamoyl phosphate site. K85 is an L-aspartate binding site. R106, H135, and Q138 together coordinate carbamoyl phosphate. 2 residues coordinate L-aspartate: R168 and R230. 2 residues coordinate carbamoyl phosphate: L268 and P269.

Belongs to the aspartate/ornithine carbamoyltransferase superfamily. ATCase family. As to quaternary structure, heterododecamer (2C3:3R2) of six catalytic PyrB chains organized as two trimers (C3), and six regulatory PyrI chains organized as three dimers (R2).

The catalysed reaction is carbamoyl phosphate + L-aspartate = N-carbamoyl-L-aspartate + phosphate + H(+). Its pathway is pyrimidine metabolism; UMP biosynthesis via de novo pathway; (S)-dihydroorotate from bicarbonate: step 2/3. Catalyzes the condensation of carbamoyl phosphate and aspartate to form carbamoyl aspartate and inorganic phosphate, the committed step in the de novo pyrimidine nucleotide biosynthesis pathway. The sequence is that of Aspartate carbamoyltransferase catalytic subunit from Pectobacterium atrosepticum (strain SCRI 1043 / ATCC BAA-672) (Erwinia carotovora subsp. atroseptica).